The primary structure comprises 122 residues: UPF0102 protein CKL_1410 (122 aa).

The protein belongs to the UPF0102 family.

The polypeptide is UPF0102 protein CKL_1410 (Clostridium kluyveri (strain ATCC 8527 / DSM 555 / NBRC 12016 / NCIMB 10680 / K1)).